The sequence spans 303 residues: Methionyl-tRNA formyltransferase (303 aa).

108-111 is a (6S)-5,6,7,8-tetrahydrofolate binding site; sequence SDLP.

Belongs to the Fmt family.

It catalyses the reaction L-methionyl-tRNA(fMet) + (6R)-10-formyltetrahydrofolate = N-formyl-L-methionyl-tRNA(fMet) + (6S)-5,6,7,8-tetrahydrofolate + H(+). In terms of biological role, attaches a formyl group to the free amino group of methionyl-tRNA(fMet). The formyl group appears to play a dual role in the initiator identity of N-formylmethionyl-tRNA by promoting its recognition by IF2 and preventing the misappropriation of this tRNA by the elongation apparatus. This Rickettsia africae (strain ESF-5) protein is Methionyl-tRNA formyltransferase.